The primary structure comprises 576 residues: Arginine--tRNA ligase (576 aa).

Positions 126-136 (ANPTGPMHIGH) match the 'HIGH' region motif.

The protein belongs to the class-I aminoacyl-tRNA synthetase family. In terms of assembly, monomer.

The protein localises to the cytoplasm. It carries out the reaction tRNA(Arg) + L-arginine + ATP = L-arginyl-tRNA(Arg) + AMP + diphosphate. The protein is Arginine--tRNA ligase of Rickettsia felis (strain ATCC VR-1525 / URRWXCal2) (Rickettsia azadi).